Reading from the N-terminus, the 170-residue chain is Adenine phosphoribosyltransferase (170 aa).

Belongs to the purine/pyrimidine phosphoribosyltransferase family. In terms of assembly, homodimer.

Its subcellular location is the cytoplasm. The catalysed reaction is AMP + diphosphate = 5-phospho-alpha-D-ribose 1-diphosphate + adenine. Its pathway is purine metabolism; AMP biosynthesis via salvage pathway; AMP from adenine: step 1/1. In terms of biological role, catalyzes a salvage reaction resulting in the formation of AMP, that is energically less costly than de novo synthesis. This Cenarchaeum symbiosum (strain A) protein is Adenine phosphoribosyltransferase.